The sequence spans 141 residues: Nucleoside diphosphate kinase (141 aa).

Residues Lys-11, Phe-59, Arg-87, Thr-93, Arg-104, and Asn-114 each contribute to the ATP site. The active-site Pros-phosphohistidine intermediate is His-117.

It belongs to the NDK family. Homotetramer. It depends on Mg(2+) as a cofactor.

The protein resides in the cytoplasm. The catalysed reaction is a 2'-deoxyribonucleoside 5'-diphosphate + ATP = a 2'-deoxyribonucleoside 5'-triphosphate + ADP. The enzyme catalyses a ribonucleoside 5'-diphosphate + ATP = a ribonucleoside 5'-triphosphate + ADP. Functionally, major role in the synthesis of nucleoside triphosphates other than ATP. The ATP gamma phosphate is transferred to the NDP beta phosphate via a ping-pong mechanism, using a phosphorylated active-site intermediate. This is Nucleoside diphosphate kinase from Alkalilimnicola ehrlichii (strain ATCC BAA-1101 / DSM 17681 / MLHE-1).